The sequence spans 470 residues: Transcriptional activator PmfR (470 aa).

Forms oligomers in solution, probably homotetramers.

It participates in alkaloid degradation; nicotine degradation [regulation]. Functionally, transcriptional regulator involved in the activation of the purU-mabO-folD-nepA-nepB and mao-ORF55-nbr operons implicated in the nicotine catabolic pathway. The sequence GTTT-14 bp-AAAC seems to be the core binding site of the regulator upstream of the -35 promoter region of the operon. This is Transcriptional activator PmfR (pmfR) from Paenarthrobacter nicotinovorans (Arthrobacter nicotinovorans).